A 1192-amino-acid chain; its full sequence is MQSSMWSFLQKKEGGEIEDIEKKISNAQELNKLKTSPKKKREAVVKEKVEKKEKKETKPKRKSSKKNKEEEEEEEQEEQDGEEEQEEEEEYQQQDEEIEEDINGEEEMELDENEKEKNKKKKQSLKTKENKESKSSSSSKKTIENKETKKPEKQSSKQSNNLKRLKRKKMDDDEEDEEDENKTDDNDLDDMLDDDSDNEKDSISSKDKEYKEKVLKDKEKKEKEKKEKELKEKESKEKEKKEKEKKEKEEKDKKEKELKEKELKEKELKDKKEKELKEKEKELKDKEKKEKELKEKEKKEKEEKEKEKKEKKEKELKEKEEKEKKEKELKEKELKEKELKEKELKEKELTSPKKETIDISDLFKRANAEAKSSVPTSTSKNSKTNKKQKVDHKPTATTKKPSPVLEAKQSTTTTTTTTTTSTATTISSKSISSPSKKEEKEVITSKKQVEATKVEVKKEKEKEKEKEKEDDEEEEEEEEDDDEKLEDIDEEEYEEEEEEDEEGISENEEEEEKKSTQIKSKFIKKVPISKKKGNAKTIQADLKVIGKYRPIEDAQWKKGEAVPYMVLAKTFEMMESTSSRLIIIEHLANLFRSIMLLSPKDLVMTIYLSINKIGPSYQSKELGIGEHVLIKSLAESTGRSVDVIKQELTEVGDLGIIAQNSRSTQTLMGKPTPLTIQSVFKTFQQIADLSGTGGQQKKKDLIKKLLVSCKDCETLYIIRSLQGKLRIGLAERSVLMALAKSVLVTPPIDGSGQQIFDIRKQMKQEEFEERYQNVVSKVTRAYSQLPNYDLFVPHLIAVNGIDNILSTCSLKVGIPVKPMLAQPTTGISQMLDRFSDMEFTCEFKYDGERAQIHRLPDGTTHIYTRNLEDYTQKYPDIVANVTKFVGPNVKSFILDCEAVAFDAATKKILSFQVLSTRARKSVQLSQIKVPVCVFAFDLLYLNGQSLIDEPLIKRREHLVENFIASDGVFAFAKYSNISDVNDIQSYLEEAVEGNCEGLMVKTLKEKSIYEPSRRSYNWLKIKKDYMQGMTDSLDLVPIGAWYGKGKRTGTYGAYLLACYDENNEEFQTLCKIGTGFSDEQLTTFTSQLKPHLINQPRNQFRFSDSIKPDVWFSPSCVWEVLAADLSISPVHTAASGILDPNKGIALRFPRFIRIRPDKSPEDATSSDQVVDMYQNQKINSQSSKINEKDEDY.

Disordered regions lie at residues 29-257 (ELNK…KEKE) and 280-517 (EKEL…KSTQ). Over residues 42–56 (EAVVKEKVEKKEKKE) the composition is skewed to basic and acidic residues. The span at 70–113 (EEEEEEQEEQDGEEEQEEEEEYQQQDEEIEEDINGEEEMELDEN) shows a compositional bias: acidic residues. Positions 141–155 (KTIENKETKKPEKQS) are enriched in basic and acidic residues. Positions 172 to 198 (DDEEDEEDENKTDDNDLDDMLDDDSDN) are enriched in acidic residues. 2 stretches are compositionally biased toward basic and acidic residues: residues 199 to 257 (EKDS…KEKE) and 280 to 368 (EKEL…RANA). Composition is skewed to low complexity over residues 371 to 382 (KSSVPTSTSKNS) and 410 to 434 (STTTTTTTTTTSTATTISSKSISSP). The segment covering 435–467 (SKKEEKEVITSKKQVEATKVEVKKEKEKEKEKE) has biased composition (basic and acidic residues). Over residues 468–511 (KEDDEEEEEEEEDDDEKLEDIDEEEYEEEEEEDEEGISENEEEE) the composition is skewed to acidic residues. Positions 724-733 (KLRIGLAERS) are interaction with target DNA. An ATP-binding site is contributed by E842. K844 (N6-AMP-lysine intermediate) is an active-site residue. 2 residues coordinate ATP: R849 and R865. E897 provides a ligand contact to Mg(2+). The interaction with target DNA stretch occupies residues 918-920 (ARK). E996 contributes to the Mg(2+) binding site. K1001, R1014, and K1020 together coordinate ATP. Residues 1157–1192 (DKSPEDATSSDQVVDMYQNQKINSQSSKINEKDEDY) are disordered. Over residues 1162-1184 (DATSSDQVVDMYQNQKINSQSSK) the composition is skewed to polar residues.

Belongs to the ATP-dependent DNA ligase family. It depends on Mg(2+) as a cofactor.

It localises to the nucleus. It carries out the reaction ATP + (deoxyribonucleotide)n-3'-hydroxyl + 5'-phospho-(deoxyribonucleotide)m = (deoxyribonucleotide)n+m + AMP + diphosphate.. Its function is as follows. DNA ligase that seals nicks in double-stranded DNA during DNA replication, DNA recombination and DNA repair. This Dictyostelium discoideum (Social amoeba) protein is DNA ligase 1 (lig1).